Reading from the N-terminus, the 272-residue chain is Putative esterase/lipase 3 (272 aa).

The active site involves His34. The active-site Charge relay system is the Ser100.

Belongs to the lipase/esterase LIP3/BchO family.

The chain is Putative esterase/lipase 3 from Mycoplasma pneumoniae (strain ATCC 29342 / M129 / Subtype 1) (Mycoplasmoides pneumoniae).